The following is a 365-amino-acid chain: MTDSQQSKPKHVMMMAAGTGGHVFPALAVAKQLQQQGCQVSWLATPIGMENRLLKDQNIPIYQIDIQGVRGNGVIRKLAAPFKILKATFSAMRYMKQLKVDAVAGFGGYVAGPGGLAARLLGIPVLIHEQNAVAGFTNAQLSRVAKVVCEAFPNTFPASEKVVTTGNPVRREITDILSPKWRYDEREQAGKPLNILIVGGSLGAKALNERLPPALKQLQVPLNIFHQCGQQQVEATQALYADAPANLTVQVLPFIEDMAKAYSEADLIICRAGALTVTEVATAGVAAVFVPLPIAVDDHQTANAKFLADVGAAKICQQSTMTPEVLNQLFTTLMNRQLLTEMAVKARQHAQPNATQHVVGLIQKM.

UDP-N-acetyl-alpha-D-glucosamine is bound by residues 19–21 (TGG), N131, R170, S201, I255, 274–279 (ALTVTE), and Q300.

It belongs to the glycosyltransferase 28 family. MurG subfamily.

It is found in the cell inner membrane. It catalyses the reaction di-trans,octa-cis-undecaprenyl diphospho-N-acetyl-alpha-D-muramoyl-L-alanyl-D-glutamyl-meso-2,6-diaminopimeloyl-D-alanyl-D-alanine + UDP-N-acetyl-alpha-D-glucosamine = di-trans,octa-cis-undecaprenyl diphospho-[N-acetyl-alpha-D-glucosaminyl-(1-&gt;4)]-N-acetyl-alpha-D-muramoyl-L-alanyl-D-glutamyl-meso-2,6-diaminopimeloyl-D-alanyl-D-alanine + UDP + H(+). It participates in cell wall biogenesis; peptidoglycan biosynthesis. Cell wall formation. Catalyzes the transfer of a GlcNAc subunit on undecaprenyl-pyrophosphoryl-MurNAc-pentapeptide (lipid intermediate I) to form undecaprenyl-pyrophosphoryl-MurNAc-(pentapeptide)GlcNAc (lipid intermediate II). This chain is UDP-N-acetylglucosamine--N-acetylmuramyl-(pentapeptide) pyrophosphoryl-undecaprenol N-acetylglucosamine transferase, found in Acinetobacter baumannii (strain SDF).